The primary structure comprises 170 residues: Large ribosomal subunit protein uL5 (170 aa).

It belongs to the universal ribosomal protein uL5 family. Part of the 50S ribosomal subunit; contacts the 5S rRNA and probably tRNA. Forms a bridge to the 30S subunit in the 70S ribosome.

This is one of the proteins that bind and probably mediate the attachment of the 5S RNA into the large ribosomal subunit, where it forms part of the central protuberance. In the 70S ribosome it contacts protein S13 of the 30S subunit (bridge B1b), connecting the 2 subunits; this bridge is implicated in subunit movement. May contact the P site tRNA; the 5S rRNA and some of its associated proteins might help stabilize positioning of ribosome-bound tRNAs. The chain is Large ribosomal subunit protein uL5 from Thermoplasma acidophilum (strain ATCC 25905 / DSM 1728 / JCM 9062 / NBRC 15155 / AMRC-C165).